The chain runs to 62 residues: uncharacterized protein (62 aa).

It is found in the plastid. The protein localises to the chloroplast. This is an uncharacterized protein from Chlamydomonas reinhardtii (Chlamydomonas smithii).